Here is a 389-residue protein sequence, read N- to C-terminus: Phospho-N-acetylmuramoyl-pentapeptide-transferase (389 aa).

11 consecutive transmembrane segments (helical) span residues 25–45 (RAVM…PWVI), 74–94 (MGGV…CDWG), 97–117 (FIWV…VDDY), 134–154 (FFWQ…SVSE), 167–187 (WIEG…VPFF), 190–210 (VSYP…IVGS), 222–242 (GLVI…AYVM), 259–279 (AGEL…FLWF), 286–306 (VFMG…VAVI), 311–331 (IVLF…MLQV), and 366–386 (QVTV…LSSL).

Belongs to the glycosyltransferase 4 family. MraY subfamily. It depends on Mg(2+) as a cofactor.

It is found in the cell inner membrane. It carries out the reaction UDP-N-acetyl-alpha-D-muramoyl-L-alanyl-gamma-D-glutamyl-meso-2,6-diaminopimeloyl-D-alanyl-D-alanine + di-trans,octa-cis-undecaprenyl phosphate = di-trans,octa-cis-undecaprenyl diphospho-N-acetyl-alpha-D-muramoyl-L-alanyl-D-glutamyl-meso-2,6-diaminopimeloyl-D-alanyl-D-alanine + UMP. The protein operates within cell wall biogenesis; peptidoglycan biosynthesis. In terms of biological role, catalyzes the initial step of the lipid cycle reactions in the biosynthesis of the cell wall peptidoglycan: transfers peptidoglycan precursor phospho-MurNAc-pentapeptide from UDP-MurNAc-pentapeptide onto the lipid carrier undecaprenyl phosphate, yielding undecaprenyl-pyrophosphoryl-MurNAc-pentapeptide, known as lipid I. The polypeptide is Phospho-N-acetylmuramoyl-pentapeptide-transferase (Cupriavidus metallidurans (strain ATCC 43123 / DSM 2839 / NBRC 102507 / CH34) (Ralstonia metallidurans)).